The following is a 512-amino-acid chain: Chitin synthase regulatory factor 2 (512 aa).

Sel1-like repeat units follow at residues 224 to 260 (SEALYLLAVCYGTGALRTEINEKEAYRLYKMAADLNH), 261 to 296 (VQAAYRVAICLQMGFGVTQNTEEAIHYFFRAASGQH), 297 to 333 (VGAMHRMALIYFRGLMSVKRDPVKAMYYLNLGALEAD), 337 to 377 (PQAL…KYGL), 378 to 414 (KDAQLRVARCFELGQLECDINLVRSFVWYRRLARKRN), and 415 to 452 (PEAMWKLSQFYLNGVDDVIYPNPELANEWAKAAAYKNH). Position 509 is a cysteine methyl ester (Cys509). The S-farnesyl cysteine moiety is linked to residue Cys509. The propeptide at 510 to 512 (IIS) is removed in mature form.

It localises to the membrane. Involved in chitin biosynthesis. In Schizosaccharomyces pombe (strain 972 / ATCC 24843) (Fission yeast), this protein is Chitin synthase regulatory factor 2 (chr2).